A 398-amino-acid polypeptide reads, in one-letter code: Lysophosphatidylserine lipase ABHD12 (398 aa).

The segment covering 1–16 (MRKRTEPVALEHERRT) has biased composition (basic and acidic residues). Residues 1–24 (MRKRTEPVALEHERRTASGSPSAG) form a disordered region. The Cytoplasmic segment spans residues 1 to 74 (MRKRTEPVAL…RKGLCFRLRK (74 aa)). Residues 75–95 (ILFFVLGLYVAIPFLIKLCPG) form a helical membrane-spanning segment. Residues 96–398 (IQAKLIFLNF…LGKSEPGRQH (303 aa)) lie on the Extracellular side of the membrane. N-linked (GlcNAc...) asparagine glycosylation is present at asparagine 123. Serine 246 (nucleophile) is an active-site residue. Catalysis depends on charge relay system residues aspartate 333 and histidine 372.

The protein belongs to the serine esterase family.

The protein localises to the endoplasmic reticulum membrane. The catalysed reaction is 1-(9Z-octadecenoyl)-sn-glycero-3-phospho-L-serine + H2O = sn-glycero-3-phospho-L-serine + (9Z)-octadecenoate + H(+). It catalyses the reaction 1-(9Z-octadecenoyl)-sn-glycero-3-phospho-(1'-sn-glycerol) + H2O = sn-glycero-3-phospho-(1'-sn-glycerol) + (9Z)-octadecenoate + H(+). The enzyme catalyses 1-(9Z-octadecenoyl)-sn-glycero-3-phospho-(1D-myo-inositol) + H2O = sn-glycero-3-phospho-1D-myo-inositol + (9Z)-octadecenoate + H(+). It carries out the reaction 1-(9Z-octadecenoyl)-sn-glycero-3-phosphoethanolamine + H2O = sn-glycero-3-phosphoethanolamine + (9Z)-octadecenoate + H(+). The catalysed reaction is 1-(9Z-octadecenoyl)-sn-glycero-3-phosphocholine + H2O = 1-(9Z-octadecenoyl)-sn-glycerol + phosphocholine + H(+). It catalyses the reaction 2-(9Z-octadecenoyl)-glycerol + H2O = glycerol + (9Z)-octadecenoate + H(+). The enzyme catalyses 1-hexadecanoyl-sn-glycero-3-phospho-L-serine + H2O = sn-glycero-3-phospho-L-serine + hexadecanoate + H(+). It carries out the reaction 2-(5Z,8Z,11Z,14Z-eicosatetraenoyl)-glycerol + H2O = glycerol + (5Z,8Z,11Z,14Z)-eicosatetraenoate + H(+). The catalysed reaction is Hydrolyzes glycerol monoesters of long-chain fatty acids.. It catalyses the reaction 1-decanoylglycerol + H2O = decanoate + glycerol + H(+). The enzyme catalyses 1-dodecanoylglycerol + H2O = dodecanoate + glycerol + H(+). It carries out the reaction 1-tetradecanoylglycerol + H2O = tetradecanoate + glycerol + H(+). The catalysed reaction is 2-hexadecanoylglycerol + H2O = glycerol + hexadecanoate + H(+). It catalyses the reaction 1-(9Z-octadecenoyl)-glycerol + H2O = glycerol + (9Z)-octadecenoate + H(+). The enzyme catalyses 2-(9Z,12Z-octadecadienoyl)-glycerol + H2O = (9Z,12Z)-octadecadienoate + glycerol + H(+). It carries out the reaction 1-(5Z,8Z,11Z,14Z-eicosatetraenoyl)-glycerol + H2O = glycerol + (5Z,8Z,11Z,14Z)-eicosatetraenoate + H(+). The catalysed reaction is 1-(9Z,12Z-octadecadienoyl)-glycerol + H2O = (9Z,12Z)-octadecadienoate + glycerol + H(+). It catalyses the reaction 1-hexadecanoylglycerol + H2O = glycerol + hexadecanoate + H(+). The enzyme catalyses 1-octadecanoylglycerol + H2O = octadecanoate + glycerol + H(+). It carries out the reaction 1-octadecanoyl-2-(9,10-epoxyoctadecanoyl)-sn-glycero-3-phospho-L-serine + H2O = 9,10-epoxyoctadecanoate + 1-octadecanoyl-sn-glycero-3-phosphoserine + H(+). The catalysed reaction is 1-octadecanoyl-2-(10-hydroxyoctadecanoyl)-sn-glycero-3-phospho-L-serine + H2O = 1-octadecanoyl-sn-glycero-3-phosphoserine + 10-hydroxyoctadecanoate + H(+). It catalyses the reaction 1-hexadecanoyl-2-(10-hydroxyoctadecanoyl)-sn-glycero-3-phospho-L-serine + H2O = 10-hydroxyoctadecanoate + 1-hexadecanoyl-sn-glycero-3-phospho-L-serine + H(+). Functionally, lysophosphatidylserine (LPS) lipase that mediates the hydrolysis of lysophosphatidylserine, a class of signaling lipids that regulates immunological and neurological processes. Represents a major lysophosphatidylserine lipase in the brain, thereby playing a key role in the central nervous system. Also able to hydrolyze oxidized phosphatidylserine; oxidized phosphatidylserine is produced in response to severe inflammatory stress and constitutes a proapoptotic 'eat me' signal. Also has monoacylglycerol (MAG) lipase activity: hydrolyzes 2-arachidonoylglycerol (2-AG), thereby acting as a regulator of endocannabinoid signaling pathways. Has a strong preference for very-long-chain lipid substrates; substrate specificity is likely due to improved catalysis and not improved substrate binding. This is Lysophosphatidylserine lipase ABHD12 from Bos taurus (Bovine).